A 286-amino-acid polypeptide reads, in one-letter code: MQILNGKETALTIREELKVEIDGLKEKHGRAPGLAVILVGEDPASQVYVRNKEIACEKAGIVSTAHRIDASVSQEELEALIQKLNADDTIDGILLQLPLPKGLDSQRCLELIDPGKDVDGFHPMNVGKLMLGLPGFRSCTPAGIITLLERYNLPTSGKKAVVVGRSNIVGKPLAMMLMQYGDFANATVTVCHSRTDNLAEEVKAADFVFAAIGIPKFIKKEMVKDGAVVVDVGINRTDEGLVGDCDYAALEDVASAMTPVPGGVGPMTIAQLLINTVQAYKEHVGA.

NADP(+) contacts are provided by residues 164–166 (GRS), Ser-193, and Ile-234.

It belongs to the tetrahydrofolate dehydrogenase/cyclohydrolase family. In terms of assembly, homodimer.

It carries out the reaction (6R)-5,10-methylene-5,6,7,8-tetrahydrofolate + NADP(+) = (6R)-5,10-methenyltetrahydrofolate + NADPH. The catalysed reaction is (6R)-5,10-methenyltetrahydrofolate + H2O = (6R)-10-formyltetrahydrofolate + H(+). It participates in one-carbon metabolism; tetrahydrofolate interconversion. Functionally, catalyzes the oxidation of 5,10-methylenetetrahydrofolate to 5,10-methenyltetrahydrofolate and then the hydrolysis of 5,10-methenyltetrahydrofolate to 10-formyltetrahydrofolate. This is Bifunctional protein FolD from Maridesulfovibrio salexigens (strain ATCC 14822 / DSM 2638 / NCIMB 8403 / VKM B-1763) (Desulfovibrio salexigens).